The sequence spans 169 residues: GTP-dependent dephospho-CoA kinase (169 aa).

GTP is bound by residues Asp45, Asp64, and Glu121.

It belongs to the GTP-dependent DPCK family.

It catalyses the reaction 3'-dephospho-CoA + GTP = GDP + CoA + H(+). It functions in the pathway cofactor biosynthesis; coenzyme A biosynthesis. In terms of biological role, catalyzes the GTP-dependent phosphorylation of the 3'-hydroxyl group of dephosphocoenzyme A to form coenzyme A (CoA). In Methanobrevibacter smithii (strain ATCC 35061 / DSM 861 / OCM 144 / PS), this protein is GTP-dependent dephospho-CoA kinase.